We begin with the raw amino-acid sequence, 388 residues long: Lipoyl synthase, mitochondrial (388 aa).

A mitochondrion-targeting transit peptide spans 1 to 18 (MRLTTVQRRFLVSTKAKV). The span at 22-39 (SISSTANTGSASAGAPNG) shows a compositional bias: low complexity. The tract at residues 22 to 43 (SISSTANTGSASAGAPNGQTRR) is disordered. [4Fe-4S] cluster is bound by residues cysteine 120, cysteine 125, cysteine 131, cysteine 151, cysteine 155, cysteine 158, and serine 366. The region spanning 134-355 (GKDKSKATAT…KDKAKEMGFL (222 aa)) is the Radical SAM core domain.

It belongs to the radical SAM superfamily. Lipoyl synthase family. The cofactor is [4Fe-4S] cluster.

It is found in the mitochondrion. It carries out the reaction [[Fe-S] cluster scaffold protein carrying a second [4Fe-4S](2+) cluster] + N(6)-octanoyl-L-lysyl-[protein] + 2 oxidized [2Fe-2S]-[ferredoxin] + 2 S-adenosyl-L-methionine + 4 H(+) = [[Fe-S] cluster scaffold protein] + N(6)-[(R)-dihydrolipoyl]-L-lysyl-[protein] + 4 Fe(3+) + 2 hydrogen sulfide + 2 5'-deoxyadenosine + 2 L-methionine + 2 reduced [2Fe-2S]-[ferredoxin]. Its pathway is protein modification; protein lipoylation via endogenous pathway; protein N(6)-(lipoyl)lysine from octanoyl-[acyl-carrier-protein]: step 2/2. Its function is as follows. Catalyzes the radical-mediated insertion of two sulfur atoms into the C-6 and C-8 positions of the octanoyl moiety bound to the lipoyl domains of lipoate-dependent enzymes, thereby converting the octanoylated domains into lipoylated derivatives. The protein is Lipoyl synthase, mitochondrial of Candida glabrata (strain ATCC 2001 / BCRC 20586 / JCM 3761 / NBRC 0622 / NRRL Y-65 / CBS 138) (Yeast).